Reading from the N-terminus, the 138-residue chain is Gamma-glutamylaminecyclotransferase (138 aa).

Glu63 acts as the Proton acceptor in catalysis.

The protein belongs to the gamma-glutamylcyclotransferase family.

It carries out the reaction epsilon-(gamma-L-glutamyl)-L-lysine = 5-oxo-L-proline + L-lysine. May contribute to degradation of proteins cross-linked by transglutaminases by degrading the cross-link between a lysine and a glutamic acid residue. Catalyzes the formation of 5-oxo-L-proline from L-gamma-glutamyl-L-epsilon-lysine. The polypeptide is Gamma-glutamylaminecyclotransferase (ggact) (Xenopus laevis (African clawed frog)).